The sequence spans 264 residues: Glutamate racemase (264 aa).

Residues 11–12 and 43–44 each bind substrate; these read DS and YG. The Proton donor/acceptor role is filled by Cys74. 75–76 serves as a coordination point for substrate; that stretch reads NT. Residue Cys193 is the Proton donor/acceptor of the active site. Substrate is bound at residue 194–195; sequence TH.

This sequence belongs to the aspartate/glutamate racemases family.

The enzyme catalyses L-glutamate = D-glutamate. Its pathway is cell wall biogenesis; peptidoglycan biosynthesis. Functionally, provides the (R)-glutamate required for cell wall biosynthesis. This is Glutamate racemase from Bifidobacterium longum subsp. infantis (strain ATCC 15697 / DSM 20088 / JCM 1222 / NCTC 11817 / S12).